The chain runs to 140 residues: 3-hydroxyacyl-[acyl-carrier-protein] dehydratase FabZ (140 aa).

The active site involves histidine 47.

The protein belongs to the thioester dehydratase family. FabZ subfamily.

The protein localises to the cytoplasm. The enzyme catalyses a (3R)-hydroxyacyl-[ACP] = a (2E)-enoyl-[ACP] + H2O. Functionally, involved in unsaturated fatty acids biosynthesis. Catalyzes the dehydration of short chain beta-hydroxyacyl-ACPs and long chain saturated and unsaturated beta-hydroxyacyl-ACPs. This is 3-hydroxyacyl-[acyl-carrier-protein] dehydratase FabZ from Streptococcus suis (strain 98HAH33).